Here is a 198-residue protein sequence, read N- to C-terminus: Dynein axonemal light chain 1 (198 aa).

4 LRR repeats span residues 49 to 70 (ACKHLALSTNNIEKISSLSGME), 71 to 92 (NLRILSLGRNLIKKIENLDAVA), 94 to 115 (TLEELWISYNQIASLSGIEKLV), and 116 to 137 (NLRVLYMSNNKITNWGEIDKLA). The LRRCT domain occupies 157–195 (KENNATSEYRIEVVKRLPNLKKLDGMPVDVDEREQANVA).

Belongs to the dynein light chain LC1-type family. Interacts with OCAD2, a outer arm dynein heavy chain. Interacts with tubulin (previously called p45) located within the A-tubule of the outer doublets in a ATP-independent manner.

The protein resides in the cytoplasm. The protein localises to the cytoskeleton. It localises to the flagellum axoneme. Part of the multisubunit axonemal ATPase complexes that generate the force for flagellar motility and govern beat frequency. Component of the outer arm dynein (ODA). May be involved in a mechanosensory feedback mechanism controlling ODA activity based on external conformational cues by tethering the outer arm dynein heavy chain (ODA2) to the A-tubule of the outer doublet microtubules within the axoneme. The sequence is that of Dynein axonemal light chain 1 from Chlamydomonas reinhardtii (Chlamydomonas smithii).